A 429-amino-acid polypeptide reads, in one-letter code: Serine hydroxymethyltransferase (429 aa).

(6S)-5,6,7,8-tetrahydrofolate-binding positions include leucine 127 and 131–133 (GHL). Lysine 236 carries the N6-(pyridoxal phosphate)lysine modification. Residue glutamate 252 coordinates (6S)-5,6,7,8-tetrahydrofolate.

Belongs to the SHMT family. As to quaternary structure, homodimer. It depends on pyridoxal 5'-phosphate as a cofactor.

It is found in the cytoplasm. It catalyses the reaction (6R)-5,10-methylene-5,6,7,8-tetrahydrofolate + glycine + H2O = (6S)-5,6,7,8-tetrahydrofolate + L-serine. It functions in the pathway one-carbon metabolism; tetrahydrofolate interconversion. Its pathway is amino-acid biosynthesis; glycine biosynthesis; glycine from L-serine: step 1/1. Its function is as follows. Catalyzes the reversible interconversion of serine and glycine with tetrahydrofolate (THF) serving as the one-carbon carrier. This reaction serves as the major source of one-carbon groups required for the biosynthesis of purines, thymidylate, methionine, and other important biomolecules. Also exhibits THF-independent aldolase activity toward beta-hydroxyamino acids, producing glycine and aldehydes, via a retro-aldol mechanism. This Rhodospirillum centenum (strain ATCC 51521 / SW) protein is Serine hydroxymethyltransferase.